A 334-amino-acid polypeptide reads, in one-letter code: Porphobilinogen deaminase (334 aa).

Residue Cys250 is modified to S-(dipyrrolylmethanemethyl)cysteine.

This sequence belongs to the HMBS family. Monomer. The cofactor is dipyrromethane.

The enzyme catalyses 4 porphobilinogen + H2O = hydroxymethylbilane + 4 NH4(+). It functions in the pathway porphyrin-containing compound metabolism; protoporphyrin-IX biosynthesis; coproporphyrinogen-III from 5-aminolevulinate: step 2/4. Functionally, tetrapolymerization of the monopyrrole PBG into the hydroxymethylbilane pre-uroporphyrinogen in several discrete steps. The chain is Porphobilinogen deaminase from Cutibacterium acnes (strain DSM 16379 / KPA171202) (Propionibacterium acnes).